A 599-amino-acid chain; its full sequence is ATP-binding cassette sub-family E member 1 (599 aa).

2 4Fe-4S ferredoxin-type domains span residues 7-37 (RIAI…MGKL) and 46-75 (KIAW…IVNL). A Glycyl lysine isopeptide (Lys-Gly) (interchain with G-Cter in ubiquitin) cross-link involves residue Lys20. ABC transporter domains lie at 79 to 315 (LEKE…FLDG) and 342 to 562 (VKKM…LSQL). ATP is bound by residues 110–117 (GTNGIGKS) and 379–386 (GENGTGKT). A Phosphoserine modification is found at Ser417. Position 550 is a phosphothreonine (Thr550).

It belongs to the ABC transporter superfamily. ABCE family. (Microbial infection) Interacts with Chandipura virus matrix protein. In terms of assembly, interacts with PINK1. Interacts with CNOT4. Interacts with PELO. Probably heterodimerizes with RNASEL; this interaction inhibits RNASEL. As to quaternary structure, (Microbial infection) Interacts with HIV-1 proteins Vif and Gag. (Microbial infection) Interacts with HIV-2 protein Gag. Post-translationally, ubiquitinated by CNOT4. Ubiquitination mediates the recruitment of autophagy receptors to the mitochondrial outer membrane and initiates mitophagy.

The protein localises to the cytoplasm. It localises to the mitochondrion. It carries out the reaction GTP + H2O = GDP + phosphate + H(+). The enzyme catalyses ATP + H2O = ADP + phosphate + H(+). It catalyses the reaction CTP + H2O = CDP + phosphate + H(+). The catalysed reaction is UTP + H2O = UDP + phosphate + H(+). Its function is as follows. Nucleoside-triphosphatase (NTPase) involved in ribosome recycling by mediating ribosome disassembly. Able to hydrolyze ATP, GTP, UTP and CTP. Splits ribosomes into free 60S subunits and tRNA- and mRNA-bound 40S subunits. Acts either after canonical termination facilitated by release factors (ETF1/eRF1) or after recognition of stalled and vacant ribosomes by mRNA surveillance factors (PELO/Pelota). Involved in the No-Go Decay (NGD) pathway: recruited to stalled ribosomes by the Pelota-HBS1L complex, and drives the disassembly of stalled ribosomes, followed by degradation of damaged mRNAs as part of the NGD pathway. Also plays a role in quality control of translation of mitochondrial outer membrane-localized mRNA. As part of the PINK1-regulated signaling, ubiquitinated by CNOT4 upon mitochondria damage; this modification generates polyubiquitin signals that recruit autophagy receptors to the mitochondrial outer membrane and initiate mitophagy. RNASEL-specific protein inhibitor which antagonizes the binding of 2-5A (5'-phosphorylated 2',5'-linked oligoadenylates) to RNASEL. Negative regulator of the anti-viral effect of the interferon-regulated 2-5A/RNASEL pathway. In terms of biological role, (Microbial infection) May act as a chaperone for post-translational events during HIV-1 capsid assembly. Functionally, (Microbial infection) Plays a role in the down-regulation of the 2-5A/RNASEL pathway during encephalomyocarditis virus (EMCV) and HIV-1 infections. This is ATP-binding cassette sub-family E member 1 (ABCE1) from Homo sapiens (Human).